Here is a 115-residue protein sequence, read N- to C-terminus: MSLDMQEWRAETTAIVNELLADGSNPDLEYDIEHHFACQDFDQLEKAAVDLFKAGFEVTDAEEMELDDGAPIFCFDATIERKLDIETIVADIEKMLPILKKYGVDYDGWGTYFQE.

The protein belongs to the RraB family. In terms of assembly, interacts with the C-terminal region of Rne.

It localises to the cytoplasm. Its function is as follows. Globally modulates RNA abundance by binding to RNase E (Rne) and regulating its endonucleolytic activity. Can modulate Rne action in a substrate-dependent manner by altering the composition of the degradosome. This is Regulator of ribonuclease activity B from Aeromonas salmonicida (strain A449).